The chain runs to 436 residues: Gamma-glutamyl phosphate reductase (436 aa).

It belongs to the gamma-glutamyl phosphate reductase family.

Its subcellular location is the cytoplasm. It carries out the reaction L-glutamate 5-semialdehyde + phosphate + NADP(+) = L-glutamyl 5-phosphate + NADPH + H(+). It functions in the pathway amino-acid biosynthesis; L-proline biosynthesis; L-glutamate 5-semialdehyde from L-glutamate: step 2/2. Its function is as follows. Catalyzes the NADPH-dependent reduction of L-glutamate 5-phosphate into L-glutamate 5-semialdehyde and phosphate. The product spontaneously undergoes cyclization to form 1-pyrroline-5-carboxylate. This chain is Gamma-glutamyl phosphate reductase, found in Prochlorococcus marinus (strain AS9601).